We begin with the raw amino-acid sequence, 550 residues long: MRFFPWGFWLLCVASAPARGDSGSKARSCAEVRQLYGAKGFSLNGVPQAEISGEHLRICPQGYTCCTSEMEENFANKSRSEFEAMMKEAGRSVQTILTAQYKSFDNYFQDLLNKSEKALYDTFPSLYGDLYTQNMKVFKDLYSELRRYYRGSNINLEEALNEFWTRLLERLFKLMNAQYHITDEYLDCMVKHAEQHKPFGEVPRDLKVKATRAFIVARSYAQGFLVGSDVVKKVSQVSLSHECTRAVMKLMYCPHCRGMASVKPCSNYCLNVVKGCLANQADLNTEWKYLMDALVAVADRIDGPYNVDTVIGTIHMRISEAISNLQENKVSITAKVFQGCGNPKVSMKGSSSEDKKRRGKVTLEAKSSAVALEMLVLDAKGNLTALKSYWVTLPGVLCSKKIMASPAEDDKCWNGMTKGSYLPEVMGGGLANQINNPEVEVDITKPDMTIRQQIMQLKIMTNRLGNANIGNDVDFQDASDDMSGSGSGDSCPDDVCVKRLSKSPSTRQPETHAIPKQSGHGVIGASSRSLPSAFLLFLSGASIVVQHLWR.

The signal sequence occupies residues 1-20 (MRFFPWGFWLLCVASAPARG). Cystine bridges form between Cys29/Cys65, Cys59/Cys253, Cys66/Cys256, Cys188/Cys340, Cys243/Cys276, Cys265/Cys412, and Cys269/Cys398. N-linked (GlcNAc...) asparagine glycosylation is found at Asn76 and Asn113. Asn382 is a glycosylation site (N-linked (GlcNAc...) asparagine). Disordered regions lie at residues 475 to 494 (FQDA…CPDD) and 502 to 522 (KSPS…GHGV). The segment covering 481 to 494 (DMSGSGSGDSCPDD) has biased composition (low complexity). Ser483, Ser485, and Ser487 each carry an O-linked (Xyl...) (heparan sulfate) serine glycan. A lipid anchor (GPI-anchor amidated glycine) is attached at Gly524. A propeptide spans 525 to 550 (ASSRSLPSAFLLFLSGASIVVQHLWR) (removed in mature form).

The protein belongs to the glypican family. O-glycosylated with heparan sulfate.

It is found in the cell membrane. The protein localises to the endosome. The protein resides in the secreted. Its subcellular location is the extracellular space. In terms of biological role, cell surface proteoglycan that bears heparan sulfate. Modulates Wnt-signaling pathway. The polypeptide is Glypican-1 (GPC1) (Gallus gallus (Chicken)).